Consider the following 370-residue polypeptide: Phosphate-binding protein PstS2 (370 aa).

An N-terminal signal peptide occupies residues 1–22; it reads MKFARSGAAVSLLAAGTLVLTA. A lipid anchor (N-palmitoyl cysteine) is attached at Cys23. Residue Cys23 is the site of S-diacylglycerol cysteine attachment. Phosphate is bound by residues 54–56, Ser84, Asp102, and 191–193; these read STA and SGT.

This sequence belongs to the PstS family. The complex is composed of two ATP-binding proteins (PstB), two transmembrane proteins (PstC and PstA) and a solute-binding protein (PstS).

Its subcellular location is the cell membrane. The protein localises to the secreted. In terms of biological role, functions in inorganic phosphate uptake, a phosphate-binding protein, although probably not the main uptake protein under phosphate starvation. Part of the ABC transporter complex PstSACB involved in phosphate import. The polypeptide is Phosphate-binding protein PstS2 (pstS2) (Mycobacterium bovis (strain BCG / Pasteur 1173P2)).